The primary structure comprises 207 residues: Transcriptional regulatory protein RcsA (207 aa).

The HTH luxR-type domain occupies 131–196 (LNMPTLSLSR…VIYHVVRLTD (66 aa)). Positions 155-174 (TIQISDQMNIKAKTVSSHKG) form a DNA-binding region, H-T-H motif.

It belongs to the RcsA family. In terms of assembly, interacts with RcsB.

Its function is as follows. Component of the Rcs signaling system, which controls transcription of numerous genes. Binds, with RcsB, to the RcsAB box to regulate expression of genes. This Escherichia coli O157:H7 protein is Transcriptional regulatory protein RcsA.